A 564-amino-acid polypeptide reads, in one-letter code: MFS-type transporter grgE (564 aa).

The span at 1–10 (MAENQVDPKR) shows a compositional bias: basic and acidic residues. The tract at residues 1–52 (MAENQVDPKRNLPLYGAADESTSATDKEDEVENVRQNGSAPPIEEARESNEA) is disordered. The N-linked (GlcNAc...) asparagine glycan is linked to asparagine 37. Transmembrane regions (helical) follow at residues 60–80 (HGLSLFFIVLAIMLATFIISL), 101–118 (KVSWYGSAYFMTFGGFQT), 131–151 (TTFLVSLFIFEIGSLICGVAP), 161–181 (AIAGLGGAGMATGGFTIIAFS), 192–212 (GLVGSAYGLSAVAGPLIGGAF), 220–240 (WCFYINLPVGGLAAVIILIFF), and 262–282 (LVGVSLLMCLIICFILALQYG). Asparagine 289 is a glycosylation site (N-linked (GlcNAc...) asparagine). Helical transmembrane passes span 293 to 313 (VIGLLVGFVAILVALIIWEYY), 329 to 349 (ALWAPSTYMFFFAGSYFILLY), 368 to 388 (VRNLPMVVTFSIAAILAGAFV), 392 to 412 (GIATPVMLVGAAIATIGTGLI), 425 to 445 (IGYQILAAFGFVIPWLIPMNI), 462 to 482 (IFLAQTLGGAFSVSAAQSAFV), and 531 to 551 (TFAISVGMVGFACLMGLFTPW).

Belongs to the major facilitator superfamily.

Its subcellular location is the membrane. Functionally, MFS-type transporter; part of the gene cluster that mediates the biosynthesis of gregatin A, a fungal polyketide featuring an alkylated furanone core. The sequence is that of MFS-type transporter grgE from Penicillium sp.